A 350-amino-acid polypeptide reads, in one-letter code: Protein RecA (350 aa).

65-72 contacts ATP; it reads GPESSGKT.

The protein belongs to the RecA family.

It localises to the cytoplasm. Functionally, can catalyze the hydrolysis of ATP in the presence of single-stranded DNA, the ATP-dependent uptake of single-stranded DNA by duplex DNA, and the ATP-dependent hybridization of homologous single-stranded DNAs. It interacts with LexA causing its activation and leading to its autocatalytic cleavage. The sequence is that of Protein RecA from Nautilia profundicola (strain ATCC BAA-1463 / DSM 18972 / AmH).